The sequence spans 215 residues: Pyrrolidone-carboxylate peptidase (215 aa).

Active-site residues include Glu81, Cys144, and His168.

The protein belongs to the peptidase C15 family. As to quaternary structure, homotetramer.

It localises to the cytoplasm. The enzyme catalyses Release of an N-terminal pyroglutamyl group from a polypeptide, the second amino acid generally not being Pro.. Removes 5-oxoproline from various penultimate amino acid residues except L-proline. The polypeptide is Pyrrolidone-carboxylate peptidase (Bacillus velezensis (strain DSM 23117 / BGSC 10A6 / LMG 26770 / FZB42) (Bacillus amyloliquefaciens subsp. plantarum)).